The following is a 223-amino-acid chain: Ribose-5-phosphate isomerase A (223 aa).

Residues 29–32 (TGST), 82–85 (DGAD), and 95–98 (KGGG) contribute to the substrate site. Glu-104 (proton acceptor) is an active-site residue. Lys-122 provides a ligand contact to substrate.

This sequence belongs to the ribose 5-phosphate isomerase family. As to quaternary structure, homodimer.

It catalyses the reaction aldehydo-D-ribose 5-phosphate = D-ribulose 5-phosphate. It participates in carbohydrate degradation; pentose phosphate pathway; D-ribose 5-phosphate from D-ribulose 5-phosphate (non-oxidative stage): step 1/1. Catalyzes the reversible conversion of ribose-5-phosphate to ribulose 5-phosphate. This chain is Ribose-5-phosphate isomerase A, found in Neisseria gonorrhoeae (strain ATCC 700825 / FA 1090).